The following is an 823-amino-acid chain: DNA ligase (823 aa).

Residues 31–35 and 73–74 each bind NAD(+); these read DDAFD and SQ. Lys100 acts as the N6-AMP-lysine intermediate in catalysis. NAD(+)-binding residues include Arg121, Glu163, Lys275, and Lys296. Residues Cys387, Cys390, Cys403, and Cys408 each contribute to the Zn(2+) site. BRCT domains lie at 562 to 655, 654 to 742, and 741 to 823; these read QAES…TGET, ETVH…DAHV, and HVHA…TPGT.

This sequence belongs to the NAD-dependent DNA ligase family. LigA subfamily. It depends on Mg(2+) as a cofactor. Mn(2+) is required as a cofactor.

The enzyme catalyses NAD(+) + (deoxyribonucleotide)n-3'-hydroxyl + 5'-phospho-(deoxyribonucleotide)m = (deoxyribonucleotide)n+m + AMP + beta-nicotinamide D-nucleotide.. In terms of biological role, DNA ligase that catalyzes the formation of phosphodiester linkages between 5'-phosphoryl and 3'-hydroxyl groups in double-stranded DNA using NAD as a coenzyme and as the energy source for the reaction. It is essential for DNA replication and repair of damaged DNA. The polypeptide is DNA ligase (Treponema pallidum (strain Nichols)).